We begin with the raw amino-acid sequence, 466 residues long: DNA polymerase delta subunit 3 (466 aa).

Alanine 2 carries the post-translational modification N-acetylalanine. Disordered regions lie at residues 145–218 (PAES…KEVM) and 255–466 (EQEV…FQRK). 3 stretches are compositionally biased toward basic and acidic residues: residues 205-218 (DANK…KEVM), 255-265 (EQEVKEEKKVE), and 281-297 (DLKK…MQQK). Residue lysine 259 forms a Glycyl lysine isopeptide (Lys-Gly) (interchain with G-Cter in SUMO); alternate linkage. Lysine 259 is covalently cross-linked (Glycyl lysine isopeptide (Lys-Gly) (interchain with G-Cter in SUMO2); alternate). A Glycyl lysine isopeptide (Lys-Gly) (interchain with G-Cter in SUMO2) cross-link involves residue lysine 262. The residue at position 308 (serine 308) is a Phosphoserine. Residues 350 to 360 (PSPPPPSPSPE) are compositionally biased toward pro residues. Phosphoserine is present on residues serine 407 and serine 409. A Phosphothreonine modification is found at threonine 411. Residue serine 413 is modified to Phosphoserine. Residues 432-441 (VKKEPKEERK) are compositionally biased toward basic and acidic residues. Lysine 433 participates in a covalent cross-link: Glycyl lysine isopeptide (Lys-Gly) (interchain with G-Cter in SUMO); alternate. A Glycyl lysine isopeptide (Lys-Gly) (interchain with G-Cter in SUMO2); alternate cross-link involves residue lysine 433. The PIP-box signature appears at 456 to 463 (QVAITGFF).

Component of both the DNA polymerase delta and DNA polymerase zeta complexes. The tetrameric DNA polymerase delta complex (Pol-delta4), which consists of POLD1/p125, POLD2/p50, POLD3/p66/p68 and POLD4/p12, with POLD1 bearing DNA polymerase and 3' to 5' proofreading exonuclease activities. Within this complex, directly interacts with POLD2. Following stress caused by DNA damaging agents or by replication stress, POLD4 is degraded and Pol-delta4 is converted into a trimeric form of the complex (Pol-delta3), which consists of POLD1, POLD2 and POLD3. Pol-delta3 is the major form occurring at S phase replication sites, as well as DNA damage sites. Directly interacts with PCNA, as do POLD1 and POLD4; this interaction stimulates Pol-delta polymerase activity. Component of the DNA polymerase zeta complex (POLZ), which consists of REV3L, MAD2L2, POLD2 and POLD3, with REV3L bearing DNA polymerase catalytic activity. The DNA polymerase delta complex interacts with POLDIP2; this interaction is probably mediated through direct binding to POLD2. Post-translationally, ubiquitinated, but not targeted to the proteasome. Sumoylated. Sumoylation by SUMO3 may be predominant.

The protein localises to the cytoplasm. Its subcellular location is the nucleus. Its function is as follows. Accessory component of both the DNA polymerase delta complex and the DNA polymerase zeta complex. As a component of the trimeric and tetrameric DNA polymerase delta complexes (Pol-delta3 and Pol-delta4, respectively), plays a role in high fidelity genome replication, including in lagging strand synthesis, and repair. Required for optimal Pol-delta activity. Stabilizes the Pol-delta complex and plays a major role in Pol-delta stimulation by PCNA. Pol-delta3 and Pol-delta4 are characterized by the absence or the presence of POLD4. They exhibit differences in catalytic activity. Most notably, Pol-delta3 shows higher proofreading activity than Pol-delta4. Although both Pol-delta3 and Pol-delta4 process Okazaki fragments in vitro, Pol-delta3 may also be better suited to fulfill this task, exhibiting near-absence of strand displacement activity compared to Pol-delta4 and stalling on encounter with the 5'-blocking oligonucleotides. Pol-delta3 idling process may avoid the formation of a gap, while maintaining a nick that can be readily ligated. Along with DNA polymerase kappa, DNA polymerase delta carries out approximately half of nucleotide excision repair (NER) synthesis following UV irradiation. In this context, POLD3, along with PCNA and RFC1-replication factor C complex, is required to recruit POLD1, the catalytic subunit of the polymerase delta complex, to DNA damage sites. Under conditions of DNA replication stress, required for the repair of broken replication forks through break-induced replication (BIR). Involved in the translesion synthesis (TLS) of templates carrying O6-methylguanine or abasic sites performed by Pol-delta4, independently of DNA polymerase zeta (REV3L) or eta (POLH). Facilitates abasic site bypass by DNA polymerase delta by promoting extension from the nucleotide inserted opposite the lesion. Also involved in TLS, as a component of the tetrameric DNA polymerase zeta complex. Along with POLD2, dramatically increases the efficiency and processivity of DNA synthesis of the DNA polymerase zeta complex compared to the minimal zeta complex, consisting of only REV3L and REV7. The sequence is that of DNA polymerase delta subunit 3 (POLD3) from Bos taurus (Bovine).